Here is a 628-residue protein sequence, read N- to C-terminus: 2-oxoacid:ferredoxin oxidoreductase 2, subunit alpha (628 aa).

Positions 254-258 match the YPITP motif motif; that stretch reads YPITP. Substrate contacts are provided by threonine 257 and arginine 344.

Heterodimer composed of an alpha and a beta subunit.

The catalysed reaction is a 2-oxocarboxylate + 2 oxidized [2Fe-2S]-[ferredoxin] + CoA = an acyl-CoA + 2 reduced [2Fe-2S]-[ferredoxin] + CO2 + H(+). In terms of biological role, catalyzes the coenzyme A-dependent oxidative decarboxylation of different 2-oxoacids such as 2-oxoglutarate, pyruvate and 2-oxobutyrate to form their CoA derivatives. This chain is 2-oxoacid:ferredoxin oxidoreductase 2, subunit alpha, found in Sulfurisphaera tokodaii (strain DSM 16993 / JCM 10545 / NBRC 100140 / 7) (Sulfolobus tokodaii).